The sequence spans 59 residues: Large ribosomal subunit protein bL32 (59 aa).

The span at Met1–Arg16 shows a compositional bias: basic residues. The tract at residues Met1 to Glu59 is disordered. The span at Val28–Leu44 shows a compositional bias: basic and acidic residues.

The protein belongs to the bacterial ribosomal protein bL32 family.

This chain is Large ribosomal subunit protein bL32, found in Brucella anthropi (strain ATCC 49188 / DSM 6882 / CCUG 24695 / JCM 21032 / LMG 3331 / NBRC 15819 / NCTC 12168 / Alc 37) (Ochrobactrum anthropi).